A 338-amino-acid chain; its full sequence is Lipoate-protein ligase A (338 aa).

Positions proline 29–valine 216 constitute a BPL/LPL catalytic domain. ATP-binding positions include arginine 71, glycine 76 to phenylalanine 79, and lysine 134. Lysine 134 serves as a coordination point for (R)-lipoate.

It belongs to the LplA family. Monomer.

Its subcellular location is the cytoplasm. It carries out the reaction L-lysyl-[lipoyl-carrier protein] + (R)-lipoate + ATP = N(6)-[(R)-lipoyl]-L-lysyl-[lipoyl-carrier protein] + AMP + diphosphate + H(+). It participates in protein modification; protein lipoylation via exogenous pathway; protein N(6)-(lipoyl)lysine from lipoate: step 1/2. Its pathway is protein modification; protein lipoylation via exogenous pathway; protein N(6)-(lipoyl)lysine from lipoate: step 2/2. Catalyzes both the ATP-dependent activation of exogenously supplied lipoate to lipoyl-AMP and the transfer of the activated lipoyl onto the lipoyl domains of lipoate-dependent enzymes. This Salmonella paratyphi C (strain RKS4594) protein is Lipoate-protein ligase A.